Here is a 365-residue protein sequence, read N- to C-terminus: Peptide chain release factor 2 (365 aa).

N5-methylglutamine is present on Q252.

The protein belongs to the prokaryotic/mitochondrial release factor family. Methylated by PrmC. Methylation increases the termination efficiency of RF2.

The protein resides in the cytoplasm. Functionally, peptide chain release factor 2 directs the termination of translation in response to the peptide chain termination codons UGA and UAA. This chain is Peptide chain release factor 2, found in Aeromonas salmonicida (strain A449).